A 362-amino-acid chain; its full sequence is tRNA-specific 2-thiouridylase MnmA (362 aa).

ATP is bound by residues 9–16 (GMSGGVDS) and M35. The interaction with target base in tRNA stretch occupies residues 95–97 (NPD). The active-site Nucleophile is C100. A disulfide bridge links C100 with C196. ATP is bound at residue G124. The interaction with tRNA stretch occupies residues 146–148 (KDQ). C196 (cysteine persulfide intermediate) is an active-site residue. Residues 308–309 (RY) are interaction with tRNA.

The protein belongs to the MnmA/TRMU family.

It localises to the cytoplasm. The catalysed reaction is S-sulfanyl-L-cysteinyl-[protein] + uridine(34) in tRNA + AH2 + ATP = 2-thiouridine(34) in tRNA + L-cysteinyl-[protein] + A + AMP + diphosphate + H(+). Catalyzes the 2-thiolation of uridine at the wobble position (U34) of tRNA, leading to the formation of s(2)U34. This is tRNA-specific 2-thiouridylase MnmA from Nitrosomonas europaea (strain ATCC 19718 / CIP 103999 / KCTC 2705 / NBRC 14298).